Reading from the N-terminus, the 117-residue chain is DNA-binding protein MK1619 (117 aa).

This sequence belongs to the PDCD5 family.

The protein is DNA-binding protein MK1619 of Methanopyrus kandleri (strain AV19 / DSM 6324 / JCM 9639 / NBRC 100938).